We begin with the raw amino-acid sequence, 451 residues long: MVQNMTYDELILRIIILLRDGKIRDFRSVIDELQPYDMAFIFKEMPEKHRARYLSYLTVDDITDMIGELEREFQLVVLNKVGKTKATLAMNKMDNDDLAQLLEEMDEELKEQLLSSMEASESKAVQLLMNYPADSAGRMMTNRYVWIPQHYTVKDAVVKLKSFAEIAESINYLYVINESKQLVGVLSYRDLILGEPEEKVQDLMFTRVISADALQDQEEVARLIERYDFLAIPVVEENNVLVGIVTVDDIIDVVIREADEDYEKFAASGKDITFDTKAYVAAYRRLPWLILLLFIGLISGSIISYFEDALKQVVALAFFMPMVSGMTGNTGTQSLAVVIRGLSKEEMNKKTIVRLIFREFRTSIFIGAVCSVLIAIVSIIWQGNALLGFVVASSLFLTLIIGTMSGTIIPIILHKLKVDPAIASGPLITTLNDILSLLIYFGIATAFIHSL.

The Cytoplasmic segment spans residues 1–285 (MVQNMTYDEL…TKAYVAAYRR (285 aa)). The Mg(2+) site is built by Asp-64 and Asp-96. 2 consecutive CBS domains span residues 140–203 (MTNR…VQDL) and 204–260 (MFTR…EADE). Mg(2+) is bound by residues Glu-218, Asp-228, Asp-249, Asp-252, Glu-257, Glu-260, and Asp-261. Residues 286-306 (LPWLILLLFIGLISGSIISYF) form a helical membrane-spanning segment. Over 307 to 311 (EDALK) the chain is Extracellular. The chain crosses the membrane as a helical span at residues 312-332 (QVVALAFFMPMVSGMTGNTGT). Over 333 to 371 (QSLAVVIRGLSKEEMNKKTIVRLIFREFRTSIFIGAVCS) the chain is Cytoplasmic. Transmembrane regions (helical) follow at residues 372 to 392 (VLIA…FVVA) and 393 to 413 (SSLF…PIIL). The Cytoplasmic segment spans residues 414–427 (HKLKVDPAIASGPL). Residues Asp-419 and Asp-433 each coordinate Mg(2+). Residues 428–448 (ITTLNDILSLLIYFGIATAFI) form a helical membrane-spanning segment. Over 449–451 (HSL) the chain is Extracellular.

This sequence belongs to the SLC41A transporter family. As to quaternary structure, homodimer.

Its subcellular location is the cell membrane. It catalyses the reaction Mg(2+)(in) = Mg(2+)(out). With respect to regulation, binds cyclic di-AMP (c-di-AMP), which may regulate the transporter activity. Functionally, acts as a magnesium transporter. MgtE is the dominant transporter under rich-medium growth conditions, and it may provide the primary route of magnesium import in B.subtilis, while the other putative transport proteins are likely to be utilized for more-specialized growth conditions. The sequence is that of Magnesium transporter MgtE from Bacillus subtilis (strain 168).